The following is a 335-amino-acid chain: MTEIYDFDKSAWDIKGSIAPIQPTTYSDGRLVPQVRVIDPGLGDRKDECFMYMSLLGVVEDSDPLGPPIGRAFGSLPLGVGRSTAKPEKLLKEATELDIVVRRTAGLNEKLVFYNNTPLTLLTPWRKVLTTGSVFNANQVCNAVNLIPLDTPQRFRVVYMSITRLSDNGYYTVPRRMLEFRSVNAVAFNLLVTLRIDKAIGPGKIIDNTEQLPEATFMVHIGNFRRKKSEVYSADYCKMKIEKMGLVFALGGIGGTSLHIRSTGKMSKTLHAQLGFKKTLCYPLMDINEDLNRLLWRSRCKIVRIQAVLQPSVPQEFRIYDDVIINDDQGLFKVL.

It belongs to the morbillivirus/respirovirus/rubulavirus M protein family. In terms of assembly, homodimer. Dimerization is critical for virion formation. Interacts with host ANP32B.

The protein localises to the virion. It localises to the host cell membrane. Its function is as follows. The M protein has a crucial role in virus assembly and interacts with the RNP complex as well as with the viral membrane. Associates with phosphatidylserine (PS) and phosphatidylinositol 4,5-bisphosphate (PIP2) at the plasma membrane. Interaction with PIP2 triggers matrix protein lattice polymerization. Matrix proteins induce host membrane deformation and curvature necessary for virion assembly/budding. The sequence is that of Matrix protein (M) from Measles virus (strain Edmonston-AIK-C vaccine) (MeV).